A 404-amino-acid polypeptide reads, in one-letter code: MSPSDVPINWKRNLTVTWLGCFLTGAAFSLVMPFLPLYVEQLGVTGHSALNMWSGLVFSITFLFSAIASPFWGGLADRKGRKIMLLRSALGMAIVMLLMGMAQNIWQFLILRALLGLLGGFIPNANALIATQVPRHKSGWALGTLSTGGVSGALLGPLAGGLLADHYGLRPVFFITASVLFICFLLTFFFIRENFLPVSKKEMLHVREVVASLKNPRLVLSLFVTTLIIQVATGSIAPILTLYVRELAGNVSNIAFISGMIASVPGVAALLSAPRLGKLGDKIGPEKILIVALIISVLLLIPMSFVQTPWQLALLRFLLGAADGALLPAVQTLLVYNSTNQIAGRIFSYNQSFRDIGNVTGPLMGAAISASYGFRAVFCVTAGVVLFNAIYSWNSLRRRRLAIE.

11 consecutive transmembrane segments (helical) span residues 19–39, 56–76, 90–110, 113–133, 144–164, 171–191, 222–242, 254–274, 288–308, 317–337, and 376–396; these read LGCFLTGAAFSLVMPFLPLYV, LVFSITFLFSAIASPFWGGLA, LGMAIVMLLMGMAQNIWQFLI, ALLGLLGGFIPNANALIATQV, TLSTGGVSGALLGPLAGGLLA, PVFFITASVLFICFLLTFFFI, LFVTTLIIQVATGSIAPILTL, IAFISGMIASVPGVAALLSAP, ILIVALIISVLLLIPMSFVQT, FLLGAADGALLPAVQTLLVYN, and AVFCVTAGVVLFNAIYSWNSL.

The protein belongs to the major facilitator superfamily. DHA1 family. MdtG (TC 2.A.1.2.20) subfamily.

It is found in the cell inner membrane. The protein is Multidrug resistance protein MdtG of Salmonella schwarzengrund (strain CVM19633).